Here is a 229-residue protein sequence, read N- to C-terminus: Cytidylate kinase (229 aa).

12-20 lines the ATP pocket; sequence GPSGTGKSS.

Belongs to the cytidylate kinase family. Type 1 subfamily.

It is found in the cytoplasm. The enzyme catalyses CMP + ATP = CDP + ADP. It carries out the reaction dCMP + ATP = dCDP + ADP. The sequence is that of Cytidylate kinase from Rhodococcus opacus (strain B4).